A 531-amino-acid chain; its full sequence is UDP-glucuronosyltransferase 1A7 (531 aa).

An N-terminal signal peptide occupies residues 1–25 (MAPADFPASLPLCVCLLLASGLAQA). N-linked (GlcNAc...) asparagine glycans are attached at residues Asn-293 and Asn-431. Residues 489–509 (VIGFLLAIVLTVVFIVFKCCA) traverse the membrane as a helical segment.

The protein belongs to the UDP-glycosyltransferase family. As to quaternary structure, homodimer. Homooligomer. Interacts with UGT1A1, UGT1A3, UGT1A4, UGT1A6, UGT1A8, UGT1A9 and UGT1A10 to form heterodimers. In terms of tissue distribution, widely expressed with highest levels detected in colon and kidney.

Its subcellular location is the endoplasmic reticulum membrane. It carries out the reaction glucuronate acceptor + UDP-alpha-D-glucuronate = acceptor beta-D-glucuronoside + UDP + H(+). The catalysed reaction is 17alpha-estradiol + UDP-alpha-D-glucuronate = 17alpha-estradiol 3-O-(beta-D-glucuronate) + UDP + H(+). The enzyme catalyses prunetin + UDP-alpha-D-glucuronate = prunetin-5-O-beta-D-glucuronide + UDP. It catalyses the reaction 5-epi-5-F2t-IsoP + UDP-alpha-D-glucuronate = 5-epi-5-F2t-IsoP-glucuronide + UDP + H(+). It carries out the reaction (E)-ferulate + UDP-alpha-D-glucuronate = (E)-ferulic acid beta-D-glucuronate ester + UDP. The catalysed reaction is candesartan + UDP-alpha-D-glucuronate = candesartan O-beta-D-glucuronoside + UDP. The enzyme catalyses SN-38 + UDP-alpha-D-glucuronate = SN-38 O-beta-D-glucuronide + UDP + H(+). It catalyses the reaction mycophenolate + UDP-alpha-D-glucuronate = mycophenolate 7-O-beta-D-glucuronide + UDP + H(+). UDP-glucuronosyltransferase (UGT) that catalyzes phase II biotransformation reactions in which lipophilic substrates are conjugated with glucuronic acid to increase the metabolite's water solubility, thereby facilitating excretion into either the urine or bile. Essential for the elimination and detoxification of drugs, xenobiotics and endogenous compounds. Catalyzes the glucuronidation of endogenous estrogen hormone epiestradiol. Involved in the glucuronidation of F2-isoprostane (5-epi-5-F2t-IsoP). Involved in the glucuronidation of the phytochemical ferulic acid at the carboxylic acid group. Also catalyzes the glucuronidation of the isoflavones genistein, daidzein, glycitein, formononetin, biochanin A and prunetin, which are phytoestrogens with anticancer and cardiovascular properties. Involved in the glucuronidation of the AGTR1 angiotensin receptor antagonist caderastan, a drug which can inhibit the effect of angiotensin II. Involved in the biotransformation of 7-ethyl-10-hydroxycamptothecin (SN-38), the pharmacologically active metabolite of the anticancer drug irinotecan. Also metabolizes mycophenolate, an immunosuppressive agent. The sequence is that of UDP-glucuronosyltransferase 1A7 from Mus musculus (Mouse).